A 145-amino-acid chain; its full sequence is Putative antiporter subunit mnhG2 (145 aa).

3 helical membrane passes run 11–31, 51–71, and 72–92; these read IAAV…IGIV, VLLT…FFSV, and RLLL…HLVA.

This sequence belongs to the CPA3 antiporters (TC 2.A.63) subunit G family. May form a heterooligomeric complex that consists of seven subunits: mnhA2, mnhB2, mnhC2, mnhD2, mnhE2, mnhF2 and mnhG2.

It is found in the cell membrane. This Staphylococcus aureus (strain JH9) protein is Putative antiporter subunit mnhG2 (mnhG2).